A 428-amino-acid chain; its full sequence is Glutamine synthetase, chloroplastic (428 aa).

A chloroplast-targeting transit peptide spans M1–A49. Positions I75–G155 constitute a GS beta-grasp domain. The disordered stretch occupies residues R94–P120. The residue at position 104 (S104) is a Phosphoserine. The GS catalytic domain maps to P159–V428.

The protein belongs to the glutamine synthetase family. Homooctamer.

It is found in the plastid. The protein resides in the chloroplast. It catalyses the reaction L-glutamate + NH4(+) + ATP = L-glutamine + ADP + phosphate + H(+). The light-modulated chloroplast enzyme, encoded by a nuclear gene and expressed primarily in leaves, is responsible for the reassimilation of the ammonia generated by photorespiration. The protein is Glutamine synthetase, chloroplastic (GLN2) of Brassica napus (Rape).